The sequence spans 696 residues: MAKKTPLERYRNIGIMAHIDAGKTTTSERILFYTGVSHKLGEVHDGAATMDWMEQEQERGITITSAATTCFWRGMAGNYPEHRINVIDTPGHVDFTIEVERSLRVLDGACTVFCAVGGVQPQTETVWRQANKYGVPRLAFVNKMDRSGANFMRVREQMISRLKTNPVPIQLPIGAEDGFAGVIDLVKMKAIYWDDASQGTKFEEREIPASMQADAAIWREKMVESAAEASEELMNKYLETGDLSIEDIKQGLRVRTINNEIVPMLCGTAFKNKGVQAMLDAVLDYLPSPLDIPAIKGTNENGVEDEREPSEDKPFSALAFKIATDPYVGQLIFFRVYSGTIKSGDTVFNPVKGKKERIGRLLQMHANQREEIKEVGTGDIAAAVGLKEVTTGDTLCDLDHIITLERMDFPEPVIHVAVEPKTKIDQEKMGIALNRLAQEDPSFRVRTDEESGQTIISGMGELHLEIIVDRMKREFGVEANVGAPQVAYREAIRKQVEIEGKFVKQSGGRGQYGHVWLRMEPNEAGKGFEFLDEIKGGVVPREYIPAVEKGLQDSLANGVLAGYPVVDVKVALFDGSYHDVDSNENAFKMAASIAFKDGMRKANPVLLEPMMAVEVETPSDFMGNVVGDLSSRRGIIQGMDDIPGFKVIRAEVPLAEMFGYSTILRSATQGRATYSMEFKHYSEAPKNVAEAIINKK.

One can recognise a tr-type G domain in the interval 8–290; that stretch reads ERYRNIGIMA…AVLDYLPSPL (283 aa). Residues 17–24, 88–92, and 142–145 contribute to the GTP site; these read AHIDAGKT, DTPGH, and NKMD.

Belongs to the TRAFAC class translation factor GTPase superfamily. Classic translation factor GTPase family. EF-G/EF-2 subfamily.

It localises to the cytoplasm. Its function is as follows. Catalyzes the GTP-dependent ribosomal translocation step during translation elongation. During this step, the ribosome changes from the pre-translocational (PRE) to the post-translocational (POST) state as the newly formed A-site-bound peptidyl-tRNA and P-site-bound deacylated tRNA move to the P and E sites, respectively. Catalyzes the coordinated movement of the two tRNA molecules, the mRNA and conformational changes in the ribosome. The protein is Elongation factor G of Nitrosomonas europaea (strain ATCC 19718 / CIP 103999 / KCTC 2705 / NBRC 14298).